A 227-amino-acid chain; its full sequence is Triosephosphate isomerase (227 aa).

9–11 (NFK) lines the substrate pocket. His93 acts as the Electrophile in catalysis. Glu141 acts as the Proton acceptor in catalysis. Residues Ile146, Gly180, and 201–202 (AS) contribute to the substrate site.

Belongs to the triosephosphate isomerase family. In terms of assembly, homotetramer; dimer of dimers.

It is found in the cytoplasm. The catalysed reaction is D-glyceraldehyde 3-phosphate = dihydroxyacetone phosphate. The protein operates within carbohydrate biosynthesis; gluconeogenesis. It functions in the pathway carbohydrate degradation; glycolysis; D-glyceraldehyde 3-phosphate from glycerone phosphate: step 1/1. Involved in the gluconeogenesis. Catalyzes stereospecifically the conversion of dihydroxyacetone phosphate (DHAP) to D-glyceraldehyde-3-phosphate (G3P). The protein is Triosephosphate isomerase of Saccharolobus solfataricus (strain ATCC 35092 / DSM 1617 / JCM 11322 / P2) (Sulfolobus solfataricus).